Here is a 170-residue protein sequence, read N- to C-terminus: Co-chaperone protein HscB homolog (170 aa).

Residues aspartate 5 to glycine 79 enclose the J domain.

Belongs to the HscB family. Interacts with HscA and stimulates its ATPase activity.

Functionally, co-chaperone involved in the maturation of iron-sulfur cluster-containing proteins. Seems to help targeting proteins to be folded toward HscA. This is Co-chaperone protein HscB homolog from Bordetella petrii (strain ATCC BAA-461 / DSM 12804 / CCUG 43448).